The sequence spans 141 residues: MPCQDTVSLSIQHTHVIIQNSCCTTVSTSASTSATAYGLGCLALGCAGIAAAGICICCLIHGCPACPRRLGVRKQSSLSKQGHVSFHHLNPSDRVSRPYHPSCPTDVDLYLGGVQHDPDYVSHAQPIETQPQPLPPPPAYS.

A helical membrane pass occupies residues 40–60; it reads GCLALGCAGIAAAGICICCLI.

Belongs to the aquareoviridae NS5 protein family.

It is found in the host membrane. This Ctenopharyngodon idella (Grass carp) protein is Non-structural protein 5 (S7).